The following is a 203-amino-acid chain: Formate hydrogenlyase subunit 2 (203 aa).

4 consecutive 4Fe-4S ferredoxin-type domains span residues 2 to 32, 42 to 72, 73 to 102, and 137 to 169; these read NRFVIADSTLCIGCHTCEAACSETHRQHGLQ, NEKESAPQLCHHCEDAPCAVVCPVNAITRVD, GAVQLNESLCVSCKLCGIACPFGAIEFSGS, and RAIAVKCDLCSFDEQGPACVRMCPTKALHLVDN. 16 residues coordinate [4Fe-4S] cluster: C12, C15, C18, C22, C51, C54, C59, C63, C82, C85, C88, C92, C143, C146, C155, and C159.

As to quaternary structure, FHL comprises of a formate dehydrogenase, unidentified electron carriers and a hydrogenase (isoenzyme 3). In this non-energy conserving pathway, molecular hydrogen and carbodioxide are released from formate. [4Fe-4S] cluster serves as cofactor.

Functionally, probable electron transfer protein for hydrogenase 3. This Escherichia coli (strain K12) protein is Formate hydrogenlyase subunit 2 (hycB).